The chain runs to 351 residues: D-alanine--D-alanine ligase (351 aa).

The ATP-grasp domain occupies 135-343 (NQIFLQSGQK…MEEVFADLIE (209 aa)). 167 to 222 (LMSLGFPQFLKPVEGGSSVSTYKITNQEQLSRQLALIFESDSKVMSQSFLAGTEVS) serves as a coordination point for ATP. Mg(2+)-binding residues include D298, E310, and N312.

The protein belongs to the D-alanine--D-alanine ligase family. It depends on Mg(2+) as a cofactor. Mn(2+) is required as a cofactor.

Its subcellular location is the cytoplasm. The catalysed reaction is 2 D-alanine + ATP = D-alanyl-D-alanine + ADP + phosphate + H(+). It functions in the pathway cell wall biogenesis; peptidoglycan biosynthesis. Functionally, cell wall formation. The sequence is that of D-alanine--D-alanine ligase from Leptospira borgpetersenii serovar Hardjo-bovis (strain JB197).